The chain runs to 69 residues: Cold shock-like protein CspC (69 aa).

Positions Gly-6 to Val-66 constitute a CSD domain.

The protein localises to the cytoplasm. The sequence is that of Cold shock-like protein CspC (cspC) from Buchnera aphidicola subsp. Acyrthosiphon pisum (strain APS) (Acyrthosiphon pisum symbiotic bacterium).